Here is a 572-residue protein sequence, read N- to C-terminus: SHUGOSHIN 1 (572 aa).

Residues 59–110 adopt a coiled-coil conformation; the sequence is KHQQQAILISSKENAENLQKENTKLMKVVMERDGIKSDLKKLRIEFQKVQEQ. Disordered stretches follow at residues 185–221, 244–285, 333–352, and 484–572; these read DADH…PANS, KLVS…QTET, ARLK…SIET, and SRRQ…RGGF. Positions 192–201 are enriched in polar residues; the sequence is SGSSNANSLQ. Basic and acidic residues-rich tracts occupy residues 244 to 257, 336 to 352, 523 to 542, and 552 to 572; these read KLVS…ENHI, KSQE…SIET, ELKR…EMRK, and AAEK…RGGF.

This sequence belongs to the shugoshin family.

Functionally, protects sister chromatid centromere cohesion in meiosis I but not through the protection of the cohesin SYN1. Required with SGO2 for full protection of centromeric cohesion during anaphase I. Required to prevent precocious release of pericentromeric cohesins during meiosis. Not necessary for the maintenance of the synaptonemal complex (SC). Not required for monopolar spindle orientation in meiosis I. The chain is SHUGOSHIN 1 from Arabidopsis thaliana (Mouse-ear cress).